Here is a 428-residue protein sequence, read N- to C-terminus: Somatostatin receptor type 3 (428 aa).

Residues 1-45 (MAAVTYPSSVPTTLDPGNASSAWPLDTSLGNASAGTSLAGLAVSG) lie on the Extracellular side of the membrane. Residues asparagine 18 and asparagine 31 are each glycosylated (N-linked (GlcNAc...) asparagine). The chain crosses the membrane as a helical span at residues 46–71 (ILISLVYLVVCVVGLLGNSLVIYVVL). The Cytoplasmic segment spans residues 72-81 (RHTSSPSVTS). Residues 82–103 (VYILNLALADELFMLGLPFLAA) traverse the membrane as a helical segment. Over 104–118 (QNALSYWPFGSLMCR) the chain is Extracellular. An intrachain disulfide couples cysteine 117 to cysteine 192. A helical transmembrane segment spans residues 119–140 (LVMAVDGINQFTSIFCLTVMSV). At 141–162 (DRYLAVVHPTRSARWRTAPVAR) the chain is on the cytoplasmic side. The helical transmembrane segment at 163–182 (MVSAAVWVASAVVVLPVVVF) threads the bilayer. The Extracellular segment spans residues 183 to 206 (SGVPRGMSTCHMQWPEPAAAWRTA). The chain crosses the membrane as a helical span at residues 207-232 (FIIYTAALGFFGPLLVICLCYLLIVV). At 233 to 266 (KVRSTTRRVRAPSCQWVQAPACQRRRRSERRVTR) the chain is on the cytoplasmic side. Residues 267 to 288 (MVVAVVALFVLCWMPFYLLNIV) traverse the membrane as a helical segment. Over 289-302 (NVVCPLPEEPAFFG) the chain is Extracellular. Residues 303–325 (LYFLVVALPYANSCANPILYGFL) traverse the membrane as a helical segment. Residues 326 to 428 (SYRFKQGFRR…GDKASTLSHL (103 aa)) are Cytoplasmic-facing. Residues serine 341, serine 346, and serine 351 each carry the phosphoserine modification. The segment at 343-428 (RVRSQEPGSG…GDKASTLSHL (86 aa)) is disordered. Threonine 357 is subject to Phosphothreonine. Residues 357 to 370 (TEEEEDEEEEERRE) are compositionally biased toward acidic residues. Polar residues predominate over residues 385–412 (RLSQIAQPGPSGQQQRPCTGTAKEQQLL).

It belongs to the G-protein coupled receptor 1 family. As to quaternary structure, homodimer and heterodimer with SSTR2. Heterodimerization with SSTR2 inactivates SSTR3 receptor function. Phosphorylated. Phosphorylation increases upon somatostatin binding. Densely expressed in cerebellum and at moderate levels in the amygdala, cortex, striatum, spleen, liver and pituitary.

It is found in the cell membrane. Receptor for somatostatin-14 and -28. This receptor is coupled via pertussis toxin sensitive G proteins to inhibition of adenylyl cyclase. This chain is Somatostatin receptor type 3 (Sstr3), found in Rattus norvegicus (Rat).